We begin with the raw amino-acid sequence, 177 residues long: Large ribosomal subunit protein uL6 (177 aa).

This sequence belongs to the universal ribosomal protein uL6 family. In terms of assembly, part of the 50S ribosomal subunit.

This protein binds to the 23S rRNA, and is important in its secondary structure. It is located near the subunit interface in the base of the L7/L12 stalk, and near the tRNA binding site of the peptidyltransferase center. The chain is Large ribosomal subunit protein uL6 from Parvibaculum lavamentivorans (strain DS-1 / DSM 13023 / NCIMB 13966).